The sequence spans 210 residues: Protein GET1 (210 aa).

Residues 1-4 (MASL) are Lumenal-facing. Residues 5 to 24 (LIIVFLSHVVTYLINTIGAT) form a helical membrane-spanning segment. The Cytoplasmic portion of the chain corresponds to 25 to 110 (TVDNLLWLLY…SFDLTVKSVR (86 aa)). A coiled-coil region spans residues 43–97 (RTAVEQRRLKGEVVQLKREMKSTSSQDEFAKWAKLRRRHDKAMEEYEAKNKALGK). A helical membrane pass occupies residues 111–131 (FFSTTGLKFFLQFWYSKTPMF). At 132–155 (ELPRGWVPWQVEWVLSFPRAPLGT) the chain is on the lumenal side. A helical membrane pass occupies residues 156-172 (VSIQVWSGVCTTVVSLA). Topologically, residues 173 to 210 (GDALGVVIQSLILKMTKRGVARTSEGRPSQPMALKKEL) are cytoplasmic.

It belongs to the WRB/GET1 family. In terms of assembly, interacts with GET3.

The protein localises to the endoplasmic reticulum membrane. Its function is as follows. Required for the post-translational delivery of tail-anchored (TA) proteins to the endoplasmic reticulum. Acts as a membrane receptor for soluble GET3, which recognizes and selectively binds the transmembrane domain of TA proteins in the cytosol. This chain is Protein GET1, found in Uncinocarpus reesii (strain UAMH 1704).